Here is an 821-residue protein sequence, read N- to C-terminus: Ent-isokaur-15-ene synthase (821 aa).

The Mg(2+) site is built by D556, D560, N701, T705, and E709. The DDXXD motif motif lies at 556-560 (DDFFD).

Belongs to the terpene synthase family. The cofactor is Mg(2+).

It catalyses the reaction ent-copalyl diphosphate = ent-isokaurene + diphosphate. Its pathway is secondary metabolite biosynthesis; terpenoid biosynthesis. Its function is as follows. Involved in the biosynthesis of ent-kaurene diterpenoids natural products. Catalyzes the conversion of ent-copalyl diphosphate to the phytoalexin precursor ent-isokaur-15-ene. In Oryza sativa subsp. indica (Rice), this protein is Ent-isokaur-15-ene synthase.